The primary structure comprises 1159 residues: MSLPQPTPRMAELRKPTSSLTPPEDPDSQPPSSKRLCLEEPGGVFKAGWRLPLVPRLSEAEKVWELSPRPFKGLLVSTNAIFDNSTDSCVEKSVSGKQICNLKCSNLKFQMSSCLQSPPSQSPDSDLRASGRSEAGLHDREAFSVHRSNSSKAGVSQLLPSTSIHDIHGIRNENRKQQFVQGRDNVHKENPFLDVTFYKETKSPFHEIKNRCKANSVVPSNKRENNISSSVLKISKSQNQPSLEIAKPSYFRDSGTISVPQFPMDLNSKMSSVYLKEIAKKKNDKKEAYVRDFTNIYWSQNRPDVKKQKLQNDKKTVEAENIFSKCYENDYPSLSSQNTCKRKDLISSNYCNCSSIQCNVRDSRKNFAILENANWEEAECLDSYVLTRLEKSQNWDCNVRHILRRNRGNCWIINNCKTKCENMKKTEEKWNWLLLLEIDLLSKEDYHCAKVINAYEEQSKLLVREILGSQTALITTVWLNGKGENDNTLQLRYNTTQKVFHVNNPFESFIIEIFYFHKSISGNKKDNSILTCCNILKCKKQIGIIGIQNLITRNMNTNIKNGILSIYLQDSVSEPLDILLKTNIAFLLNNFDSLTRIENDFELEEECIFKCMLYLKYPKNIVENHTAYLVKILTSSRLLEDNMKPMLKKRKLFRTEQVFEKSKKKLINSFSMTTQNTGFPIFETYEKIPLLMDFDDMDEISLIREITCQNMSCPQQVVNVENWAHYNSSTVKAHGNSCPQFIQNNRGYINENFYEVNMHSQDLNMERKQGHNKISNFDCEHIFEDLCNVRQQAIPASHNIIHNEETHTTSITQVLNFWNLLSEIEEKKYDLILKEEVKVTAESLTNSCQVHKDTKIEKEEKDSFFPMDDMFSVQSVSLISKEVNVEENKYVNQNYVTNTNEYESILPEREIANSKDFHRKNDSALYINHQFETGLSEGNDECFQDLAAKYLSTEALTIVKDFEMKRKFDLVLEELRMFHEISRENELLSTVETNNGQENYFGENDAEKVKMEIEKDLKMVVVNKIRASSSFHDTIAGPNMGKSHQSLFKWKTVPNNGEQEVPNESCYPSRSEEELLYSTSEKDCETPLPKRPAFLPDECKEEFNYLLRGGSHFPHGISRVRPLKTCSRPIRIGLSRKARIKQLHPYLKQMCYGNLKENF.

The disordered stretch occupies residues 1–35 (MSLPQPTPRMAELRKPTSSLTPPEDPDSQPPSSKR). The interval 1111–1159 (SHFPHGISRVRPLKTCSRPIRIGLSRKARIKQLHPYLKQMCYGNLKENF) is interaction with RAD51.

As to quaternary structure, interacts with RAD51. In terms of tissue distribution, specifically expressed in meiotic tissues. Highly expressed in testis.

This is RAD51-associated protein 2 (RAD51AP2) from Homo sapiens (Human).